A 677-amino-acid chain; its full sequence is Methionine--tRNA ligase (677 aa).

A 'HIGH' region motif is present at residues 15 to 25 (PYANGSIHLGH). Residues cysteine 146, cysteine 149, cysteine 159, and cysteine 162 each coordinate Zn(2+). The 'KMSKS' region motif lies at 333-337 (KMSKS). Lysine 336 is a binding site for ATP. The tRNA-binding domain maps to 575-677 (DFAKIDLRVA…DGAKPGQQVK (103 aa)).

This sequence belongs to the class-I aminoacyl-tRNA synthetase family. MetG type 1 subfamily. In terms of assembly, homodimer. Zn(2+) serves as cofactor.

The protein localises to the cytoplasm. It catalyses the reaction tRNA(Met) + L-methionine + ATP = L-methionyl-tRNA(Met) + AMP + diphosphate. Functionally, is required not only for elongation of protein synthesis but also for the initiation of all mRNA translation through initiator tRNA(fMet) aminoacylation. The polypeptide is Methionine--tRNA ligase (Salmonella typhi).